A 393-amino-acid polypeptide reads, in one-letter code: Riboflavin biosynthesis protein RibBA (393 aa).

Residues 1-200 (MQFDTIELAI…IKSLVAFRKA (200 aa)) are DHBP synthase. D-ribulose 5-phosphate contacts are provided by residues 27–28 (RE), aspartate 32, 139–143 (RNGHT), and glutamate 163. Glutamate 28 provides a ligand contact to Mg(2+). Histidine 142 serves as a coordination point for Mg(2+). The GTP cyclohydrolase II stretch occupies residues 201–393 (VELNVNLKAK…TKKNKMGHLI (193 aa)). 249-253 (RMHSA) is a binding site for GTP. The Zn(2+) site is built by cysteine 254, cysteine 265, and cysteine 267. Residues glutamine 270, 291–293 (EGR), and threonine 313 contribute to the GTP site. Aspartate 325 acts as the Proton acceptor; for GTP cyclohydrolase activity in catalysis. Arginine 327 acts as the Nucleophile; for GTP cyclohydrolase activity in catalysis. The GTP site is built by serine 348 and lysine 353.

This sequence in the N-terminal section; belongs to the DHBP synthase family. The protein in the C-terminal section; belongs to the GTP cyclohydrolase II family. Mg(2+) serves as cofactor. Requires Mn(2+) as cofactor. It depends on Zn(2+) as a cofactor.

It catalyses the reaction D-ribulose 5-phosphate = (2S)-2-hydroxy-3-oxobutyl phosphate + formate + H(+). The enzyme catalyses GTP + 4 H2O = 2,5-diamino-6-hydroxy-4-(5-phosphoribosylamino)-pyrimidine + formate + 2 phosphate + 3 H(+). It participates in cofactor biosynthesis; riboflavin biosynthesis; 2-hydroxy-3-oxobutyl phosphate from D-ribulose 5-phosphate: step 1/1. It functions in the pathway cofactor biosynthesis; riboflavin biosynthesis; 5-amino-6-(D-ribitylamino)uracil from GTP: step 1/4. In terms of biological role, catalyzes the conversion of D-ribulose 5-phosphate to formate and 3,4-dihydroxy-2-butanone 4-phosphate. Functionally, catalyzes the conversion of GTP to 2,5-diamino-6-ribosylamino-4(3H)-pyrimidinone 5'-phosphate (DARP), formate and pyrophosphate. The chain is Riboflavin biosynthesis protein RibBA from Staphylococcus epidermidis (strain ATCC 12228 / FDA PCI 1200).